Reading from the N-terminus, the 212-residue chain is Large ribosomal subunit protein uL3 (212 aa).

A disordered region spans residues 136-155 (THGNSLSHRSNGSIGQNQTP). Gln-153 carries the N5-methylglutamine modification.

Belongs to the universal ribosomal protein uL3 family. As to quaternary structure, part of the 50S ribosomal subunit. Forms a cluster with proteins L14 and L19. In terms of processing, methylated by PrmB.

Functionally, one of the primary rRNA binding proteins, it binds directly near the 3'-end of the 23S rRNA, where it nucleates assembly of the 50S subunit. In Shewanella baltica (strain OS223), this protein is Large ribosomal subunit protein uL3.